The following is a 252-amino-acid chain: Ribosomal RNA large subunit methyltransferase E (252 aa).

5 residues coordinate S-adenosyl-L-methionine: Gly48, Trp50, Asp68, Asp84, and Asp107. Lys147 (proton acceptor) is an active-site residue. One can recognise a TRAM domain in the interval 194–252 (PVREGDTLEVEIDNLGDEGDGVAKVDGYTLFVSGAEPGDAPEVRVTDVKPRFGFAETLE).

It belongs to the class I-like SAM-binding methyltransferase superfamily. RNA methyltransferase RlmE family.

Its subcellular location is the cytoplasm. It catalyses the reaction uridine(2552) in 23S rRNA + S-adenosyl-L-methionine = 2'-O-methyluridine(2552) in 23S rRNA + S-adenosyl-L-homocysteine + H(+). Specifically methylates the uridine in position 2552 of 23S rRNA at the 2'-O position of the ribose in the fully assembled 50S ribosomal subunit. The sequence is that of Ribosomal RNA large subunit methyltransferase E from Natronomonas pharaonis (strain ATCC 35678 / DSM 2160 / CIP 103997 / JCM 8858 / NBRC 14720 / NCIMB 2260 / Gabara) (Halobacterium pharaonis).